Consider the following 67-residue polypeptide: Small ribosomal subunit protein bS21 (67 aa).

This sequence belongs to the bacterial ribosomal protein bS21 family.

The protein is Small ribosomal subunit protein bS21 of Oleidesulfovibrio alaskensis (strain ATCC BAA-1058 / DSM 17464 / G20) (Desulfovibrio alaskensis).